A 378-amino-acid polypeptide reads, in one-letter code: Circumsporozoite protein (378 aa).

A signal peptide spans 1 to 22 (MKNFNLLAVSSILLVDLFPTHC). The interval 50–291 (AQVRQSASRG…GQGQNNEGAN (242 aa)) is disordered. Composition is skewed to basic and acidic residues over residues 66-92 (PKNE…ENKL) and 101-126 (ARAE…DGAR). The required for the binding to heparan sulfate proteoglycans (HSPGs) on the surface of host hepatocytes stretch occupies residues 80-88 (KKVEPKKPR). The segment at 91 to 95 (KLKQP) is region I; contains the proteolytic cleavage site. 24 consecutive repeat copies span residues 99 to 104 (DGARAE), 105 to 110 (DGARAE), 111 to 116 (DGARAE), 117 to 122 (DGARAE), 123 to 128 (DGARAA), 129 to 134 (DGARAA), 135 to 140 (DGARAA), 141 to 146 (DGARAE), 147 to 152 (DGARAE), 153 to 158 (DGARAE), 159 to 164 (DGARAA), 165 to 170 (DGARAA), 171 to 176 (DGARAA), 177 to 182 (DGARAA), 183 to 188 (DGARAA), 189 to 194 (DGARAA), 195 to 200 (DGARAA), 201 to 206 (DGARAE), 212 to 222 (GNREGGQAGAG), 223 to 233 (GNQAGGQAGAG), 234 to 244 (GNQAGGQAGAG), 245 to 255 (GNQAGGQAGAG), 256 to 266 (GNQAGGQAGAG), and 267 to 277 (GNRAGGQAGAG). The 18 X 6 AA tandem repeats of D-G-A-R-A-[EA] stretch occupies residues 99 to 206 (DGARAEDGAR…ARAADGARAE (108 aa)). Over residues 127–140 (AADGARAADGARAA) the composition is skewed to low complexity. Over residues 141-162 (DGARAEDGARAEDGARAEDGAR) the composition is skewed to basic and acidic residues. Residues 163–200 (AADGARAADGARAADGARAADGARAADGARAADGARAA) show a composition bias toward low complexity. The 6 X 11 AA tandem repeats of G-N-[QR]-[AE]-G-G-Q-A-G-A-G stretch occupies residues 212 to 277 (GNREGGQAGA…NRAGGQAGAG (66 aa)). The span at 214-283 (REGGQAGAGG…AGAGDAGAGQ (70 aa)) shows a compositional bias: gly residues. Residues 304–356 (KIRSTIGVEWSPCTVTCGKGVRMRRKVSAANKKPEELDVNDLETEVCTMDKCA) enclose the TSP type-1 domain. Intrachain disulfides connect C316–C350 and C320–C355. A glycan (O-linked (Fuc) threonine) is linked at T319. C355 carries GPI-anchor amidated cysteine lipidation. A propeptide spans 356–378 (AGIFNVVSNSLGLVILLVLALFN) (removed in mature form).

It belongs to the plasmodium circumsporozoite protein family. In terms of processing, during host cell invasion, proteolytically cleaved at the cell membrane in the region I by a papain-like cysteine protease of parasite origin. Cleavage is triggered by the sporozoite contact with highly sulfated heparan sulfate proteoglycans (HSPGs) present on the host hepatocyte cell surface. Cleavage exposes the TSP type-1 (TSR) domain and is required for productive invasion of host hepatocytes but not for adhesion to the host cell membrane. Cleavage is dispensable for sporozoite development in the oocyst, motility and for traversal of host and vector cells. Post-translationally, O-glycosylated; maybe by POFUT2.

It is found in the cell membrane. The protein resides in the cytoplasm. Essential sporozoite protein. In the mosquito vector, required for sporozoite development in the oocyst, migration through the vector hemolymph and entry into the vector salivary glands. In the vertebrate host, required for sporozoite migration through the host dermis and infection of host hepatocytes. Binds to highly sulfated heparan sulfate proteoglycans (HSPGs) on the surface of host hepatocytes. Its function is as follows. In the vertebrate host, binds to highly sulfated heparan sulfate proteoglycans (HSPGs) on the surface of host hepatocytes and is required for sporozoite invasion of the host hepatocytes. The protein is Circumsporozoite protein of Plasmodium cynomolgi (strain London).